Reading from the N-terminus, the 523-residue chain is Glutamate--cysteine ligase (523 aa).

Belongs to the glutamate--cysteine ligase type 1 family. Type 1 subfamily.

It carries out the reaction L-cysteine + L-glutamate + ATP = gamma-L-glutamyl-L-cysteine + ADP + phosphate + H(+). Its pathway is sulfur metabolism; glutathione biosynthesis; glutathione from L-cysteine and L-glutamate: step 1/2. This Baumannia cicadellinicola subsp. Homalodisca coagulata protein is Glutamate--cysteine ligase.